The following is a 595-amino-acid chain: Tyrosine-protein phosphatase cdcA (595 aa).

Residues 32–57 (TPFPYPAEQPKSPSKRRAQASPSKKR) are disordered. The span at 44 to 57 (PSKRRAQASPSKKR) shows a compositional bias: basic residues. Positions 233–381 (LPSTVSEVRS…QGSFREWWFE (149 aa)) constitute a Tyrosine-protein phosphatase domain. The active-site Phosphocysteine intermediate is Cys322. The tract at residues 392-595 (QPNPVTPGRS…GSPVRVKAQA (204 aa)) is disordered. Basic residues predominate over residues 449 to 461 (RKSHRKDSRHHPY). The span at 471–483 (VDKDTRKTRRSTD) shows a compositional bias: basic and acidic residues. The span at 502–526 (SKSPAASPGQRSISYSATVTASYTL) shows a compositional bias: polar residues.

Belongs to the protein-tyrosine phosphatase family. Non-receptor class CDC14 subfamily.

It is found in the nucleus. The protein localises to the cytoplasm. It localises to the cell septum. It carries out the reaction O-phospho-L-tyrosyl-[protein] + H2O = L-tyrosyl-[protein] + phosphate. Protein phosphatase which antagonizes mitotic cyclin-dependent kinase nimX, the inactivation of which is essential for exit from mitosis. To access its substrates, is released from nucleolar sequestration during mitosis. Plays an essential in coordinating the nuclear division cycle with cytokinesis through the cytokinesis checkpoint. Involved in chromosome segregation, where it is required for meiosis I spindle dissambly as well as for establishing two consecutive chromosome segregation phases. Required for the transcription of the two major endoglucanase genes eglA and eglB and growth on synthetic cellulose as the sole carbon source. The polypeptide is Tyrosine-protein phosphatase cdcA (cdcA) (Emericella nidulans (strain FGSC A4 / ATCC 38163 / CBS 112.46 / NRRL 194 / M139) (Aspergillus nidulans)).